The following is a 411-amino-acid chain: Lycopene beta cyclase (411 aa).

4–32 (ALVIGSGPAGLAIAAELAQRGLKVQGLSP) provides a ligand contact to NAD(+).

It belongs to the lycopene cyclase family. FAD serves as cofactor.

The enzyme catalyses a carotenoid psi-end group = a carotenoid beta-end derivative. It catalyses the reaction all-trans-lycopene = gamma-carotene. It carries out the reaction gamma-carotene = all-trans-beta-carotene. The catalysed reaction is all-trans-neurosporene = beta-zeacarotene. The protein operates within carotenoid biosynthesis; beta-carotene biosynthesis. It participates in carotenoid biosynthesis; beta-zeacarotene biosynthesis. Its activity is regulated as follows. Inhibited by the bleaching herbicide 2-(4-methylphenoxy)triethylamine hydrochloride (MPTA). Catalyzes the double cyclization reaction which converts lycopene to beta-carotene. It also converts neurosporene to the monocyclic beta-zeacarotene but does not cyclize zeta-carotene. The protein is Lycopene beta cyclase of Synechococcus elongatus (strain ATCC 33912 / PCC 7942 / FACHB-805) (Anacystis nidulans R2).